Here is a 259-residue protein sequence, read N- to C-terminus: Deoxyribose-phosphate aldolase (259 aa).

Residue Asp-102 is the Proton donor/acceptor of the active site. Lys-167 functions as the Schiff-base intermediate with acetaldehyde in the catalytic mechanism. Lys-201 (proton donor/acceptor) is an active-site residue.

Belongs to the DeoC/FbaB aldolase family. DeoC type 2 subfamily.

The protein resides in the cytoplasm. It carries out the reaction 2-deoxy-D-ribose 5-phosphate = D-glyceraldehyde 3-phosphate + acetaldehyde. The protein operates within carbohydrate degradation; 2-deoxy-D-ribose 1-phosphate degradation; D-glyceraldehyde 3-phosphate and acetaldehyde from 2-deoxy-alpha-D-ribose 1-phosphate: step 2/2. Catalyzes a reversible aldol reaction between acetaldehyde and D-glyceraldehyde 3-phosphate to generate 2-deoxy-D-ribose 5-phosphate. This chain is Deoxyribose-phosphate aldolase, found in Erwinia tasmaniensis (strain DSM 17950 / CFBP 7177 / CIP 109463 / NCPPB 4357 / Et1/99).